A 1196-amino-acid polypeptide reads, in one-letter code: NACHT, LRR and PYD domains-containing protein 1b allele 5 (1196 aa).

The disordered stretch occupies residues 1–22; it reads MEESPPKQKSNTKVTQHEGQQD. The 310-residue stretch at 126-435 folds into the NACHT domain; that stretch reads QLVIIEGAAG…EFFAAISCIL (310 aa). 132–139 is an ATP binding site; that stretch reads GAAGIGKS. 2 LRR repeats span residues 627–647 and 684–704; these read NLEG…QSLC and SLTE…RMLC. The ZU5 stretch occupies residues 789–922; the sequence is FWGPTGPVAT…GYTVLKNPSF (134 aa). The 284-residue stretch at 789–1072 folds into the FIIND domain; sequence FWGPTGPVAT…KFDHLCDQEF (284 aa). A UPA region spans residues 923-1072; that stretch reads SPMGVVLRII…KFDHLCDQEF (150 aa). Residues 1106 to 1189 form the CARD domain; it reads HFMDQHREQL…HLVMDLFEKS (84 aa).

The protein belongs to the NLRP family. Interacts with DPP9; leading to inhibit activation of the inflammasome. DPP9 acts via formation of a ternary complex, composed of a DPP9 homodimer, one full-length Nlrp1b protein, and one cleaved C-terminus of Nlrp1b (NACHT, LRR and PYD domains-containing protein 1b, C-terminus). Interacts with DPP8; leading to inhibit activation of the inflammasome, probably via formation of a ternary complex with DPP8. Interacts (via LRR repeats) with BCL2 and BCL2L1 (via the loop between motifs BH4 and BH3). Interacts with NOD2; this interaction may increase IL1B release. Interacts with EIF2AK2/PKR; this interaction requires EIF2AK2 activity, is accompanied by EIF2AK2 autophosphorylation and promotes inflammasome assembly in response to B.anthracis lethal toxin. Interacts with MEFV; this interaction targets Nlrp1b to degradation by autophagy, hence preventing excessive IL1B- and IL18-mediated inflammation. As to quaternary structure, interacts with the C-terminal part of Nlrp1b (NACHT, LRR and PYD domains-containing protein 1b, C-terminus) in absence of pathogens and other damage-associated signals. In terms of assembly, interacts with the N-terminal part of Nlrp1b (NACHT, LRR and PYD domains-containing protein 1b, N-terminus) in absence of pathogens and other damage-associated signals. Homomultimer; forms the Nlrp1b inflammasome polymeric complex, a filament composed of homopolymers of this form in response to pathogens and other damage-associated signals. The Nlrp1b inflammasome polymeric complex directly recruits pro-caspase-1 (proCASP1) independently of PYCARD/ASC. Interacts (via CARD domain) with CASP1 (via CARD domain); leading to CASP1 activation. Post-translationally, autocatalytically cleaved. Autocatalytic cleavage in FIIND region occurs constitutively, prior to activation signals, and is required for inflammasome activity (IL1B release), possibly by facilitating CASP1 binding. Both N- and C-terminal parts remain associated non-covalently. In terms of processing, ubiquitinated by the N-end rule pathway in response to pathogens and other damage-associated signals, leading to its degradation by the proteasome and subsequent release of the cleaved C-terminal part of the protein (NACHT, LRR and PYD domains-containing protein 1b, C-terminus), which polymerizes and forms the Nlrp1b inflammasome. (Microbial infection) Cleavage by B.anthracis lethal toxin (LT) endopeptidase promotes ubiquitination and degradation of the N-terminal part, releasing the cleaved C-terminal part of the protein (NACHT, LRR and PYD domains-containing protein 1b, C-terminus), which polymerizes and forms the Nlrp1b inflammasome. Expressed in macrophages.

Its subcellular location is the cytoplasm. The protein resides in the cytosol. It localises to the inflammasome. Activated by cleavage by B.anthracis lethal toxin (LT) endopeptidase. Cleavage by LT promotes ubiquitination and degradation of the N-terminal part, releasing the cleaved C-terminal part of the protein (NACHT, LRR and PYD domains-containing protein 1b, C-terminus), which polymerizes and forms the Nlrp1b inflammasome. Nlrp1b inflammasome is inhibited by DPP8 and DPP9, which sequester the C-terminal fragment of Nlrp1b (NACHT, LRR and PYD domains-containing protein 1b, C-terminus) in a ternary complex, thereby preventing Nlrp1b oligomerization and activation. Nlrp1b inflammasome is activated by Val-boroPro (Talabostat, PT-100), an inhibitor of dipeptidyl peptidases DPP8 and DPP9. Val-boroPro relieves inhibition of DPP8 and/or DPP9 by promoting disruption of the ternary complex, releasing its C-terminal part from autoinhibition. Activated by metabolic inhibitors, such as 2-deoxy-D-glucose and sodium azide. Not activated by muramyl dipeptide, nor by full-length bacterial peptidoglycan. Functionally, acts as the sensor component of the Nlrp1b inflammasome, which mediates inflammasome activation in response to various pathogen-associated signals, leading to subsequent pyroptosis. Inflammasomes are supramolecular complexes that assemble in the cytosol in response to pathogens and other damage-associated signals and play critical roles in innate immunity and inflammation. Acts as a recognition receptor (PRR): recognizes specific pathogens and other damage-associated signals, such as B.anthracis lethal toxin (LT) or Val-boroPro inhibitor, and mediates the formation of the inflammasome polymeric complex. In response to pathogen-associated signals, the N-terminal part of Nlrp1b is degraded by the proteasome, releasing the cleaved C-terminal part of the protein (NACHT, LRR and PYD domains-containing protein 1b, C-terminus), which polymerizes to initiate the formation of the inflammasome complex: the inflammasome directly recruits pro-caspase-1 (proCASP1) independently of PYCARD/ASC and promotes caspase-1 (CASP1) activation, which subsequently cleaves and activates inflammatory cytokines IL1B and IL18 and gasdermin-D (GSDMD), leading to pyroptosis. In the absence of GSDMD expression, the Nlrp1b inflammasome is able to recruit and activate CASP8, leading to activation of gasdermin-E (GSDME). Activation of Nlrp1b inflammasome is also required for HMGB1 secretion; the active cytokines and HMGB1 stimulate inflammatory responses. Primary mediator of macrophage susceptibility to B.anthracis LT: in response to B.anthracis infection, macrophages and dendritic cells release IL1B and undergo pyroptosis. This early inflammatory response to the toxin increases resistance to infection by B.anthracis spores. Constitutes the precursor of the Nlrp1b inflammasome, which mediates autoproteolytic processing within the FIIND domain to generate the N-terminal and C-terminal parts, which are associated non-covalently in absence of pathogens and other damage-associated signals. In terms of biological role, regulatory part that prevents formation of the Nlrp1b inflammasome: in absence of pathogens and other damage-associated signals, interacts with the C-terminal part of Nlrp1b (NACHT, LRR and PYD domains-containing protein 1b, C-terminus), preventing activation of the Nlrp1b inflammasome. In response to pathogen-associated signals, this part is ubiquitinated by the N-end rule pathway and degraded by the proteasome, releasing the cleaved C-terminal part of the protein, which polymerizes and forms the Nlrp1b inflammasome. Its function is as follows. Constitutes the active part of the Nlrp1b inflammasome. In absence of pathogens and other damage-associated signals, interacts with the N-terminal part of Nlrp1b (NACHT, LRR and PYD domains-containing protein 1b, N-terminus), preventing activation of the Nlrp1b inflammasome. In response to pathogen-associated signals, the N-terminal part of Nlrp1b is degraded by the proteasome, releasing this form, which polymerizes to form the Nlrp1b inflammasome complex: the Nlrp1b inflammasome complex then directly recruits pro-caspase-1 (proCASP1) and promotes caspase-1 (CASP1) activation, leading to gasdermin-D (GSDMD) cleavage and subsequent pyroptosis. This is NACHT, LRR and PYD domains-containing protein 1b allele 5 (Nlrp1b) from Mus musculus (Mouse).